Reading from the N-terminus, the 577-residue chain is Probable L-gulonolactone oxidase 4 (577 aa).

The N-terminal stretch at 1–17 (MSFWLSLIFCFFTFASS) is a signal peptide. The FAD-binding PCMH-type domain occupies 46-228 (SICKAAKVEY…SQVTFELQPM (183 aa)).

It belongs to the oxygen-dependent FAD-linked oxidoreductase family. FAD serves as cofactor.

The enzyme catalyses L-gulono-1,4-lactone + O2 = L-ascorbate + H2O2 + H(+). It functions in the pathway cofactor biosynthesis; L-ascorbate biosynthesis. Its function is as follows. May be involved in the biosynthesis of ascorbic acid. The chain is Probable L-gulonolactone oxidase 4 from Arabidopsis thaliana (Mouse-ear cress).